The primary structure comprises 158 residues: Cyclic pyranopterin monophosphate synthase (158 aa).

Substrate contacts are provided by residues 76–78 and 114–115; these read MCH and ME. Asp129 is an active-site residue.

This sequence belongs to the MoaC family. Homohexamer; trimer of dimers.

The enzyme catalyses (8S)-3',8-cyclo-7,8-dihydroguanosine 5'-triphosphate = cyclic pyranopterin phosphate + diphosphate. The protein operates within cofactor biosynthesis; molybdopterin biosynthesis. In terms of biological role, catalyzes the conversion of (8S)-3',8-cyclo-7,8-dihydroguanosine 5'-triphosphate to cyclic pyranopterin monophosphate (cPMP). The chain is Cyclic pyranopterin monophosphate synthase from Clostridium perfringens (strain 13 / Type A).